Reading from the N-terminus, the 86-residue chain is Putative membrane protein insertion efficiency factor (86 aa).

Residues 66 to 86 are disordered; sequence PLHEGGDDPVPPRKNDDNREN.

Belongs to the UPF0161 family.

It is found in the cell inner membrane. Could be involved in insertion of integral membrane proteins into the membrane. This chain is Putative membrane protein insertion efficiency factor, found in Proteus mirabilis (strain HI4320).